The primary structure comprises 221 residues: uncharacterized protein (221 aa).

This is an uncharacterized protein from Methanocaldococcus jannaschii (strain ATCC 43067 / DSM 2661 / JAL-1 / JCM 10045 / NBRC 100440) (Methanococcus jannaschii).